The chain runs to 91 residues: Probable Fe(2+)-trafficking protein (91 aa).

The protein belongs to the Fe(2+)-trafficking protein family.

In terms of biological role, could be a mediator in iron transactions between iron acquisition and iron-requiring processes, such as synthesis and/or repair of Fe-S clusters in biosynthetic enzymes. This chain is Probable Fe(2+)-trafficking protein, found in Burkholderia cenocepacia (strain ATCC BAA-245 / DSM 16553 / LMG 16656 / NCTC 13227 / J2315 / CF5610) (Burkholderia cepacia (strain J2315)).